We begin with the raw amino-acid sequence, 97 residues long: UPF0250 protein RSc0326 (97 aa).

It belongs to the UPF0250 family.

In Ralstonia nicotianae (strain ATCC BAA-1114 / GMI1000) (Ralstonia solanacearum), this protein is UPF0250 protein RSc0326.